The chain runs to 932 residues: Alanine--tRNA ligase, mitochondrial (932 aa).

Residues 458-480 form a disordered region; it reads SRLTWNTSSSSSDQTTQQTTQLP. Positions 464–478 are enriched in low complexity; it reads TSSSSSDQTTQQTTQ. Residues His-610, His-614, Cys-713, and His-717 each coordinate Zn(2+).

Belongs to the class-II aminoacyl-tRNA synthetase family. Monomer. Requires Zn(2+) as cofactor.

The protein resides in the mitochondrion. It catalyses the reaction tRNA(Ala) + L-alanine + ATP = L-alanyl-tRNA(Ala) + AMP + diphosphate. In terms of biological role, catalyzes the attachment of alanine to tRNA(Ala) in a two-step reaction: alanine is first activated by ATP to form Ala-AMP and then transferred to the acceptor end of tRNA(Ala). Also edits incorrectly charged tRNA(Ala) via its editing domain. The protein is Alanine--tRNA ligase, mitochondrial (malaS) of Dictyostelium discoideum (Social amoeba).